The following is a 732-amino-acid chain: Cullin-3A (732 aa).

The 63-residue stretch at 662–724 (DRKPQIEAAI…RDFLERDSTD (63 aa)) folds into the Cullin neddylation domain. K676 participates in a covalent cross-link: Glycyl lysine isopeptide (Lys-Gly) (interchain with G-Cter in NEDD8).

It belongs to the cullin family. Interacts with CSN2 and RBX1A. Interacts with BTB/POZ domain-containing proteins BPM1, BPM2, BPM3, BPM6, BT1, BT2, BT3, BT5, AT1G01640, AT1G21780 and AT5G48510. Interacts with SR1IP1. Interacts with NPR3 and NPR4. Binds to NPR1; this interaction requires NPR3 and NPR4. Post-translationally, neddylated. Deneddylated via its interaction with the COP9 signalosome (CSN) complex.

Component of the cullin-RING ubiquitin ligases (CRL), or CUL3-RBX1-BTB protein E3 ligase complexes which mediate the ubiquitination and subsequent proteasomal degradation of target proteins. The functional specificity of the CRL complex depends on the BTB domain-containing protein as the substrate recognition component. Involved in embryo pattern formation and endosperm development. Required for the normal division and organization of the root stem cells and columella root cap cells. Regulates primary root growth by an unknown pathway, but in an ethylene-dependent manner. Functions in distal root patterning, by an ethylene-independent mechanism. Functionally redundant with CUL3B. The protein is Cullin-3A of Arabidopsis thaliana (Mouse-ear cress).